The chain runs to 292 residues: GTP cyclohydrolase FolE2 (292 aa).

Belongs to the GTP cyclohydrolase IV family.

It carries out the reaction GTP + H2O = 7,8-dihydroneopterin 3'-triphosphate + formate + H(+). Its pathway is cofactor biosynthesis; 7,8-dihydroneopterin triphosphate biosynthesis; 7,8-dihydroneopterin triphosphate from GTP: step 1/1. Its function is as follows. Converts GTP to 7,8-dihydroneopterin triphosphate. This Staphylococcus saprophyticus subsp. saprophyticus (strain ATCC 15305 / DSM 20229 / NCIMB 8711 / NCTC 7292 / S-41) protein is GTP cyclohydrolase FolE2.